The primary structure comprises 657 residues: Pentatricopeptide repeat-containing protein At1g11710, mitochondrial (657 aa).

A mitochondrion-targeting transit peptide spans Met1–Ala74. PPR repeat units lie at residues Ser147–Val181, Ser182–Glu216, Asn217–Pro251, Asn252–Met282, Asn290–Cys324, Asn325–Val359, Asn360–Ile394, Asp395–Glu429, Asp430–Leu464, Asp465–Ser499, Asn500–Lys530, Asp531–Lys565, Ser568–Pro602, and Asp603–Pro637.

The protein belongs to the PPR family. P subfamily.

The protein localises to the mitochondrion. This Arabidopsis thaliana (Mouse-ear cress) protein is Pentatricopeptide repeat-containing protein At1g11710, mitochondrial.